A 973-amino-acid chain; its full sequence is Probable outer membrane protein pmp13 (973 aa).

Positions 1–24 (MKTSIRKFLISTTLAPCFASTAFT) are cleaved as a signal peptide. Positions 284-293 (QNNTASPQNS) are enriched in polar residues. A disordered region spans residues 284-303 (QNNTASPQNSLPAPTPPPTP). One can recognise an Autotransporter domain in the interval 691–973 (EDVPGKQLSI…TLDIGSKLRF (283 aa)).

The protein belongs to the PMP outer membrane protein family.

Its subcellular location is the secreted. The protein resides in the cell wall. It localises to the cell outer membrane. The protein is Probable outer membrane protein pmp13 (pmp13) of Chlamydia pneumoniae (Chlamydophila pneumoniae).